The sequence spans 2537 residues: Centrosomal protein of 192 kDa (2537 aa).

Disordered stretches follow at residues 69-138 (FSVP…ATES) and 288-308 (HSSE…LPGT). Over residues 70–81 (SVPSGSSPGSQS) the composition is skewed to low complexity. A compositionally biased stretch (polar residues) spans 106-122 (VESQRLSNALSKQSALQ). Positions 288-298 (HSSETTHKESE) are enriched in basic and acidic residues. Ser812 carries the post-translational modification Phosphoserine. Disordered regions lie at residues 950–1021 (VTFE…QQQP), 1043–1064 (VSEP…DRKS), 1101–1158 (KGTL…WTSN), and 1182–1234 (ATSH…STVH). The span at 960–970 (PKNSDLKNTSP) shows a compositional bias: polar residues. Positions 984–1005 (FRPSTSPLSHSSPSEISGTSSS) are enriched in low complexity. 2 stretches are compositionally biased toward polar residues: residues 1046-1055 (PESSYPTTAT) and 1103-1112 (TLSSIIQNNS). Basic and acidic residues predominate over residues 1128-1141 (EYVKPDFRWSKDPS). Over residues 1142–1158 (SKSGNLLETSEVGWTSN) the composition is skewed to polar residues. A compositionally biased stretch (basic and acidic residues) spans 1195 to 1207 (EDQRISPKDKSTA). Residues 1213-1234 (GQVSHQTTSENQCTPIPSSTVH) show a composition bias toward polar residues. A phosphoserine mark is found at Ser1755, Ser2098, and Ser2110. A Hydroxyproline modification is found at Pro2313.

Interacts with SHBG. Interacts with PLK4; this interaction mediates the formation of a ternary complex composed by PLK4, TENT5C and CEP192. Interacts with CCDC66. Hydroxylation by PHD1/EGLN2 at Pro-2313 promotes ubiquitination. In terms of processing, ubiquitinated by a SCF(SKP2) complex following proline hydroxylation. Post-translationally, ubiquitinated in a FBXL13-dependent manner, leading to proteasomal degradation.

The protein resides in the cytoplasm. The protein localises to the cytoskeleton. It is found in the microtubule organizing center. It localises to the centrosome. Its subcellular location is the centriole. In terms of biological role, required for mitotic centrosome maturation and bipolar spindle assembly. Appears to be a major regulator of pericentriolar material (PCM) recruitment, centrosome maturation, and centriole duplication. Centrosome-specific activating scaffold for AURKA and PLK1. The sequence is that of Centrosomal protein of 192 kDa from Homo sapiens (Human).